Reading from the N-terminus, the 158-residue chain is Acetolactate synthase small subunit (158 aa).

Residues Met4–Asp79 enclose the ACT domain.

This sequence belongs to the acetolactate synthase small subunit family. Dimer of large and small chains.

It carries out the reaction 2 pyruvate + H(+) = (2S)-2-acetolactate + CO2. It functions in the pathway amino-acid biosynthesis; L-isoleucine biosynthesis; L-isoleucine from 2-oxobutanoate: step 1/4. The protein operates within amino-acid biosynthesis; L-valine biosynthesis; L-valine from pyruvate: step 1/4. This Lactococcus lactis subsp. lactis (strain IL1403) (Streptococcus lactis) protein is Acetolactate synthase small subunit (ilvH).